The sequence spans 227 residues: 7-cyano-7-deazaguanine synthase (227 aa).

9–19 (LSGGLDSATVL) provides a ligand contact to ATP. The Zn(2+) site is built by C189, C199, C202, and C205.

This sequence belongs to the QueC family. The cofactor is Zn(2+).

It carries out the reaction 7-carboxy-7-deazaguanine + NH4(+) + ATP = 7-cyano-7-deazaguanine + ADP + phosphate + H2O + H(+). It functions in the pathway purine metabolism; 7-cyano-7-deazaguanine biosynthesis. Its function is as follows. Catalyzes the ATP-dependent conversion of 7-carboxy-7-deazaguanine (CDG) to 7-cyano-7-deazaguanine (preQ(0)). In Cupriavidus metallidurans (strain ATCC 43123 / DSM 2839 / NBRC 102507 / CH34) (Ralstonia metallidurans), this protein is 7-cyano-7-deazaguanine synthase.